Reading from the N-terminus, the 158-residue chain is UPF0262 protein R00612 (158 aa).

The protein belongs to the UPF0262 family.

In Rhizobium meliloti (strain 1021) (Ensifer meliloti), this protein is UPF0262 protein R00612.